The sequence spans 32 residues: Zinc metalloproteinase/disintegrin-like CdtV1 (32 aa).

Disulfide bonds link C5/C14 and C7/C15.

Belongs to the venom metalloproteinase (M12B) family. P-II subfamily. P-IIa sub-subfamily. Monomer. As to expression, expressed by the venom gland.

The protein resides in the secreted. Its function is as follows. Snake venom metalloproteinase that impairs hemostasis in the envenomed animal. In Crotalus durissus terrificus (South American rattlesnake), this protein is Zinc metalloproteinase/disintegrin-like CdtV1.